The following is a 142-amino-acid chain: MKTFSIKSSNIKRHWYYVDATNKILGRLASALSFHLRGKHKTEYTPHLDTGDYIIVINASKILVTGNKRINKIYYHHTGYVGGIKQSRFEEMISSHPERVIEIAVKGMLPKGALGRSMFKKLKVFSNENHEHIAQCPQLLNI.

This sequence belongs to the universal ribosomal protein uL13 family. In terms of assembly, part of the 50S ribosomal subunit.

Its function is as follows. This protein is one of the early assembly proteins of the 50S ribosomal subunit, although it is not seen to bind rRNA by itself. It is important during the early stages of 50S assembly. The chain is Large ribosomal subunit protein uL13 from Buchnera aphidicola subsp. Acyrthosiphon pisum (strain 5A).